Here is a 321-residue protein sequence, read N- to C-terminus: Glycerol-3-phosphate phosphatase (321 aa).

Catalysis depends on D34, which acts as the Nucleophile. Mg(2+) contacts are provided by D34, D36, and D260. D36 functions as the Proton donor in the catalytic mechanism.

The protein belongs to the HAD-like hydrolase superfamily. CbbY/CbbZ/Gph/YieH family. Homodimer. The cofactor is Mg(2+). In terms of tissue distribution, detected in all tissues including red cells, lymphocytes and cultured fibroblasts (at protein level). The highest activities occur in skeletal muscle and cardiac muscle.

The enzyme catalyses O-phospho-L-tyrosyl-[protein] + H2O = L-tyrosyl-[protein] + phosphate. It catalyses the reaction sn-glycerol 1-phosphate + H2O = glycerol + phosphate. The catalysed reaction is sn-glycerol 3-phosphate + H2O = glycerol + phosphate. Its function is as follows. Glycerol-3-phosphate phosphatase hydrolyzing glycerol-3-phosphate into glycerol. Thereby, regulates the cellular levels of glycerol-3-phosphate a metabolic intermediate of glucose, lipid and energy metabolism. Was also shown to have a 2-phosphoglycolate phosphatase activity and a tyrosine-protein phosphatase activity. However, their physiological relevance is unclear. In vitro, also has a phosphatase activity toward ADP, ATP, GDP and GTP. This is Glycerol-3-phosphate phosphatase from Homo sapiens (Human).